We begin with the raw amino-acid sequence, 266 residues long: 2-dehydro-3-deoxy-D-gluconate/2-dehydro-3-deoxy-phosphogluconate aldolase (266 aa).

Substrate contacts are provided by residues 36–37 (ST), 123–125 (YNI), and 151–153 (KDS). The active-site Schiff-base intermediate with substrate is the K151.

The protein belongs to the DapA family. KDPG aldolase subfamily. As to quaternary structure, homotetramer; dimer of dimers.

It catalyses the reaction 2-dehydro-3-deoxy-6-phospho-D-gluconate = D-glyceraldehyde 3-phosphate + pyruvate. The catalysed reaction is 2-dehydro-3-deoxy-D-gluconate = D-glyceraldehyde + pyruvate. The enzyme catalyses 2-dehydro-3-deoxy-6-phospho-D-galactonate = D-glyceraldehyde 3-phosphate + pyruvate. It carries out the reaction 2-dehydro-3-deoxy-D-galactonate = D-glyceraldehyde + pyruvate. It functions in the pathway carbohydrate acid metabolism; 2-dehydro-3-deoxy-D-gluconate degradation; D-glyceraldehyde 3-phosphate and pyruvate from 2-dehydro-3-deoxy-D-gluconate: step 2/2. Its function is as follows. Involved in the degradation of glucose via the Entner-Doudoroff pathway. Catalyzes the reversible cleavage of 2-keto-3-deoxy-6-phosphogluconate (KDPG) and 2-keto-3-deoxygluconate (KDG) forming pyruvate and glyceraldehyde 3-phosphate or glyceraldehyde, respectively. It is also able to catalyze the reversible cleavage of 2-keto-3-deoxy-6-phosphogalactonate (KDPGal) and 2-keto-3-deoxygalactonate (KDGal). It is equally active with both D- and L-glyceraldehyde. This Picrophilus torridus (strain ATCC 700027 / DSM 9790 / JCM 10055 / NBRC 100828 / KAW 2/3) protein is 2-dehydro-3-deoxy-D-gluconate/2-dehydro-3-deoxy-phosphogluconate aldolase.